Reading from the N-terminus, the 208-residue chain is ATP synthase subunit b 1 (208 aa).

Residues 1–18 (MFVSTAFAQTATESQPAS) are compositionally biased toward polar residues. The interval 1 to 26 (MFVSTAFAQTATESQPASTAGEHGAA) is disordered. The helical transmembrane segment at 56–78 (SQVLWLAITFGLFYLFLSRVVLP) threads the bilayer.

It belongs to the ATPase B chain family. As to quaternary structure, F-type ATPases have 2 components, F(1) - the catalytic core - and F(0) - the membrane proton channel. F(1) has five subunits: alpha(3), beta(3), gamma(1), delta(1), epsilon(1). F(0) has three main subunits: a(1), b(2) and c(10-14). The alpha and beta chains form an alternating ring which encloses part of the gamma chain. F(1) is attached to F(0) by a central stalk formed by the gamma and epsilon chains, while a peripheral stalk is formed by the delta and b chains.

It localises to the cell inner membrane. Functionally, f(1)F(0) ATP synthase produces ATP from ADP in the presence of a proton or sodium gradient. F-type ATPases consist of two structural domains, F(1) containing the extramembraneous catalytic core and F(0) containing the membrane proton channel, linked together by a central stalk and a peripheral stalk. During catalysis, ATP synthesis in the catalytic domain of F(1) is coupled via a rotary mechanism of the central stalk subunits to proton translocation. Component of the F(0) channel, it forms part of the peripheral stalk, linking F(1) to F(0). This chain is ATP synthase subunit b 1, found in Brucella abortus (strain 2308).